An 81-amino-acid polypeptide reads, in one-letter code: Photosystem I iron-sulfur center (81 aa).

4Fe-4S ferredoxin-type domains follow at residues 2 to 31 (SHSV…MIPW) and 39 to 68 (IASA…VRVY). Positions 11, 14, 17, 21, 48, 51, 54, and 58 each coordinate [4Fe-4S] cluster.

In terms of assembly, the eukaryotic PSI reaction center is composed of at least 11 subunits. Requires [4Fe-4S] cluster as cofactor.

It is found in the plastid. Its subcellular location is the chloroplast thylakoid membrane. The catalysed reaction is reduced [plastocyanin] + hnu + oxidized [2Fe-2S]-[ferredoxin] = oxidized [plastocyanin] + reduced [2Fe-2S]-[ferredoxin]. Functionally, apoprotein for the two 4Fe-4S centers FA and FB of photosystem I (PSI); essential for photochemical activity. FB is the terminal electron acceptor of PSI, donating electrons to ferredoxin. The C-terminus interacts with PsaA/B/D and helps assemble the protein into the PSI complex. Required for binding of PsaD and PsaE to PSI. PSI is a plastocyanin-ferredoxin oxidoreductase, converting photonic excitation into a charge separation, which transfers an electron from the donor P700 chlorophyll pair to the spectroscopically characterized acceptors A0, A1, FX, FA and FB in turn. The sequence is that of Photosystem I iron-sulfur center from Zea mays (Maize).